A 51-amino-acid chain; its full sequence is UPF0181 protein VVA0806 (51 aa).

It belongs to the UPF0181 family.

This chain is UPF0181 protein VVA0806, found in Vibrio vulnificus (strain YJ016).